The primary structure comprises 177 residues: Protein LIGHT-DEPENDENT SHORT HYPOCOTYLS 10 (177 aa).

A compositionally biased stretch (basic and acidic residues) spans 1–10 (MSSPRERGKS). Disordered regions lie at residues 1–31 (MSSP…SQKR) and 144–177 (RGIP…FSFS). The ALOG domain maps to 25–152 (RYESQKRRDW…ARGIPYKKKK (128 aa)). Positions 150-154 (KKKKK) match the Nuclear localization signal motif. Positions 168–177 (SSSSSSFSFS) are enriched in low complexity.

This sequence belongs to the plant homeotic and developmental regulators ALOG protein family.

The protein localises to the nucleus. In terms of biological role, probable transcription regulator that acts as a developmental regulator by promoting cell growth in response to light. This is Protein LIGHT-DEPENDENT SHORT HYPOCOTYLS 10 (LSH10) from Arabidopsis thaliana (Mouse-ear cress).